The following is a 417-amino-acid chain: Gamma-glutamyl phosphate reductase (417 aa).

The protein belongs to the gamma-glutamyl phosphate reductase family.

The protein resides in the cytoplasm. The enzyme catalyses L-glutamate 5-semialdehyde + phosphate + NADP(+) = L-glutamyl 5-phosphate + NADPH + H(+). Its pathway is amino-acid biosynthesis; L-proline biosynthesis; L-glutamate 5-semialdehyde from L-glutamate: step 2/2. Its function is as follows. Catalyzes the NADPH-dependent reduction of L-glutamate 5-phosphate into L-glutamate 5-semialdehyde and phosphate. The product spontaneously undergoes cyclization to form 1-pyrroline-5-carboxylate. This chain is Gamma-glutamyl phosphate reductase, found in Serratia proteamaculans (strain 568).